A 208-amino-acid chain; its full sequence is Large ribosomal subunit protein uL4 (208 aa).

Positions 44–76 (RRQGTQSTKTKSEVRGGGRKPWRQKGTGRARHG) are disordered. Residues 60 to 76 (GGRKPWRQKGTGRARHG) show a composition bias toward basic residues.

Belongs to the universal ribosomal protein uL4 family. In terms of assembly, part of the 50S ribosomal subunit.

Functionally, one of the primary rRNA binding proteins, this protein initially binds near the 5'-end of the 23S rRNA. It is important during the early stages of 50S assembly. It makes multiple contacts with different domains of the 23S rRNA in the assembled 50S subunit and ribosome. Its function is as follows. Forms part of the polypeptide exit tunnel. The chain is Large ribosomal subunit protein uL4 from Acetivibrio thermocellus (strain ATCC 27405 / DSM 1237 / JCM 9322 / NBRC 103400 / NCIMB 10682 / NRRL B-4536 / VPI 7372) (Clostridium thermocellum).